Reading from the N-terminus, the 68-residue chain is Tau-scoloptoxin(04)-Ssm1b (68 aa).

Positions 1-25 are cleaved as a signal peptide; sequence MLKSFCILSVFMVLFLAKFPDLCSG. A propeptide spanning residues 26–36 is cleaved from the precursor; it reads EEISPLKIVVR. Cystine bridges form between Cys45–Cys56 and Cys50–Cys63. The interval 55–67 is highly charged C-terminal region, binds to TRPV1 channel; it reads RCSIVDKQCIKKE.

It belongs to the scoloptoxin-04 family. As to expression, expressed by the venom gland.

The protein localises to the secreted. Functionally, extremely potent agonist and potentiator of TRPV1 (EC(50)=470-521.5 nM (mouse)). It strongly promotes the heat activation process by downshifting the activation threshold temperature. It preferably binds to the activated channel and promotes its opening. Holding the channel closed by cooling prevents binding of this toxin, leaving it ineffective. The toxin binds to the charge-rich outer pore region of the channel where it directly interacts with the pore helix and turret, two adjacent structural elements known to be critical for activation gating of TRPV1. In comparison with Sm1b, induces a TRPV1 desensitization with slower kinetics (20 seconds). In vivo, induces pain in mice after intraplantar injection. Its function is as follows. Potent agonist and probable potentiator of TRPV1 (EC(50)=38.35 uM (mouse)). Also binds to the outer pore region of TRPV1. In comparison with Sm1a, induces a TRPV1 desensitization with faster kinetics (2 seconds) and leads to a more complete TRPV1 desensitization. Desensitization is achieved by reducing both the open probability and the single-channel conductance upon prolonged exposure. In Scolopendra mutilans (Chinese red-headed centipede), this protein is Tau-scoloptoxin(04)-Ssm1b.